Consider the following 1947-residue polypeptide: Sodium channel protein type 3 subunit alpha (1947 aa).

Residues 1–128 (MAQALLVPPG…KIAIKILVHS (128 aa)) are Cytoplasmic-facing. The tract at residues 28–60 (RAAEEKAKKPKKEQDIDDENKPKPNSDLEAGKN) is disordered. Over residues 46-57 (ENKPKPNSDLEA) the composition is skewed to basic and acidic residues. The stretch at 110 to 455 (ILTPLNPVRK…QQMLEQLKKQ (346 aa)) is one I repeat. The helical transmembrane segment at 129–146 (LFSMLIMCTILTNCVFMT) threads the bilayer. Over 147–152 (LSNPPD) the chain is Extracellular. Residues 153–174 (WTKNVEYTFTGIYTFESLIKIL) form a helical membrane-spanning segment. Residues 175–188 (ARGFCLEDFTFLRD) are Cytoplasmic-facing. The helical transmembrane segment at 189–206 (PWNWLDFSVIVMAYVTEF) threads the bilayer. Residues 207–213 (VDLGNVS) are Extracellular-facing. Asparagine 211 carries an N-linked (GlcNAc...) asparagine glycan. Residues 214–235 (ALRTFRVLRALKTISVIPGLKT) form a helical membrane-spanning segment. The Cytoplasmic segment spans residues 236–249 (IVGALIQSVKKLSD). Residues 250 to 269 (VMILTVFCLSVFALIGLQLF) traverse the membrane as a helical segment. Residues 270-369 (MGNLRNKCLQ…NYGYTSFDTF (100 aa)) lie on the Extracellular side of the membrane. 5 N-linked (GlcNAc...) asparagine glycosylation sites follow: asparagine 290, asparagine 296, asparagine 302, asparagine 307, and asparagine 339. The pore-forming intramembrane region spans 370–386 (SWAFLSLFRLMTQDYWE). The Extracellular portion of the chain corresponds to 387-397 (NLYQLTLRAAG). A helical transmembrane segment spans residues 398–424 (KTYMIFFVLVIFLGSFYLVNLILAVVA). Residues 425–712 (MAYEEQNQAT…LVNLIVMDPF (288 aa)) lie on the Cytoplasmic side of the membrane. Serine 484, serine 485, and serine 486 each carry phosphoserine. Disordered regions lie at residues 493 to 529 (SKSA…SESE) and 587 to 632 (VGSE…ETEV). Over residues 500-509 (RNRRKKRRQR) the composition is skewed to basic residues. 2 stretches are compositionally biased toward basic and acidic residues: residues 510–529 (EHLE…SESE) and 596–622 (DEHS…ERRN). The stretch at 693–965 (CCDSWLKVKH…QIAVGRMQKG (273 aa)) is one II repeat. Residues 713 to 730 (VDLAITICIVLNTLFMAM) form a helical membrane-spanning segment. Over 731 to 738 (EHYPMTEQ) the chain is Extracellular. Residues 739 to 763 (FSSVLTVGNLVFTGIFTAEMVLKII) form a helical membrane-spanning segment. Over 764-773 (AMDPYYYFQE) the chain is Cytoplasmic. The chain crosses the membrane as a helical span at residues 774–793 (GWNIFDGIIVSLSLMELGLA). Topologically, residues 794 to 797 (NVEG) are extracellular. Residues 798 to 816 (LSVLRSFRLLRVFKLAKSW) form a helical membrane-spanning segment. The Cytoplasmic segment spans residues 817-834 (PTLNMLIKIIGNSVGALG). The helical transmembrane segment at 835 to 855 (NLTLVLAIIVFIFAVVGMQLF) threads the bilayer. Topologically, residues 856 to 880 (GKSYKECVCKINEDCKLPRWHMNDF) are extracellular. Cysteine 864 and cysteine 870 are oxidised to a cystine. Positions 881–896 (FHSFLIVFRVLCGEWI) form an intramembrane region, pore-forming. The Extracellular portion of the chain corresponds to 897–907 (ETMWDCMEVAG). Cysteine 902 and cysteine 911 are disulfide-bonded. A helical membrane pass occupies residues 908–934 (QTMCLIVFMLVMVIGNLVVLNLFLALL). The Cytoplasmic segment spans residues 935-1157 (LSSFSSDNLA…RKTCYSIVEH (223 aa)). A disordered region spans residues 1070–1113 (EEFSSESELEESKEKLNATSSSEGSTVDVAPPREGEQAEIEPEE). The stretch at 1140-1451 (KGKIWWNLRK…KKYYNAMKKL (312 aa)) is one III repeat. The chain crosses the membrane as a helical span at residues 1158 to 1178 (NWFETFIVFMILLSSGALAFE). Residues 1179–1190 (DIYIEQRKTIKT) lie on the Extracellular side of the membrane. Residues 1191 to 1212 (MLEYADKVFTYIFILEMLLKWV) form a helical membrane-spanning segment. Residues 1213–1218 (AYGFQT) are Cytoplasmic-facing. A helical membrane pass occupies residues 1219-1244 (YFTNAWCWLDFLIVDVSLVSLVANAL). At 1245–1253 (GYSELGAIK) the chain is on the extracellular side. A helical transmembrane segment spans residues 1254–1272 (SLRTLRALRPLRALSRFEG). Topologically, residues 1273 to 1285 (MRVVVNALVGAIP) are cytoplasmic. Residues 1286–1308 (SIMNVLLVCLIFWLIFSIMGVNL) form a helical membrane-spanning segment. The Extracellular segment spans residues 1309–1354 (FAGKFYHCVNMTTGSMFDMSEVNNFSDCQALGKQARWKNVKVNFDN). Cysteine 1316 and cysteine 1336 are joined by a disulfide. N-linked (GlcNAc...) asparagine glycans are attached at residues asparagine 1318 and asparagine 1332. Residues 1355 to 1371 (VGAGYLALLQVATFKGW) constitute an intramembrane region (pore-forming). Over 1372-1394 (MDIMYAAVDSRDVKLQPVYEENL) the chain is Extracellular. A helical transmembrane segment spans residues 1395 to 1420 (YMYLYFVIFIIFGSFFTLNLFIGVII). Topologically, residues 1421–1478 (DNFNQQKKKFGGQDIFMTEEQKKYYNAMKKLGSKKPQKPIPRPANKFQGMVFDFVTRQ) are cytoplasmic. Serine 1453 bears the Phosphoserine mark. One copy of the IV repeat lies at 1460–1758 (IPRPANKFQG…WEKFDPDATQ (299 aa)). A helical transmembrane segment spans residues 1479–1497 (VFDISIMILICLNMVTMMV). The Extracellular segment spans residues 1498–1505 (ETDDQSKY). A helical membrane pass occupies residues 1506–1529 (MTLVLSRINLVFIVLFTGEFLLKL). Residues 1530-1539 (ISLRYYYFTI) lie on the Cytoplasmic side of the membrane. A helical transmembrane segment spans residues 1540–1557 (GWNIFDFVVVILSIVGMF). The Extracellular segment spans residues 1558 to 1569 (LAELIEKYFVSP). The helical transmembrane segment at 1570–1592 (TLFRVIRLARIGRILRLIKGAKG) threads the bilayer. At 1593–1605 (IRTLLFALMMSLP) the chain is on the cytoplasmic side. A helical membrane pass occupies residues 1606-1629 (ALFNIGLLLFLVMFIYAIFGMSNF). The Extracellular segment spans residues 1630-1651 (AYVKKEAGIDDMFNFETFGNSM). Residues 1652–1664 (ICLFQITTSAGWD) constitute an intramembrane region (pore-forming). Over 1665-1696 (GLLAPILNSAPPDCDPDAIHPGSSVKGDCGNP) the chain is Extracellular. Residues 1697–1722 (SVGIFFFVSYIIISFLVVVNMYIAVI) traverse the membrane as a helical segment. Over 1723–1947 (LENFSVATEE…PEKESKGKEV (225 aa)) the chain is Cytoplasmic. The region spanning 1852–1881 (EEVSAAIIQRNYRCYLLKQRLKNISNTYDK) is the IQ domain. The segment at 1901–1947 (LNGNSTPEKTDGSSSTTSPPSYDSVTKPDKEKFEKDKPEKESKGKEV) is disordered. A compositionally biased stretch (basic and acidic residues) spans 1926–1947 (TKPDKEKFEKDKPEKESKGKEV).

This sequence belongs to the sodium channel (TC 1.A.1.10) family. Nav1.3/SCN3A subfamily. Heterooligomer of an alpha subunit, SCN3A, and 1 to 3 regulatory beta subunits including SCN1B and SCN2B; disulfide-linked with some beta subunits like SCN2B. Interacts with NEDD4L; could regulate expression of SCN3A at the plasma membrane through ubiquitination-regulated endocytosis. May be ubiquitinated by NEDD4L; which would promote its endocytosis. Post-translationally, phosphorylation at Ser-1453 in a highly conserved cytoplasmic loop slows inactivation of the channel and reduces peak sodium currents. Expressed in enterochromaffin cells in both colon and small bowel (at protein level). Expressed in pancreatic alpha and beta cells.

The protein resides in the cell membrane. Its subcellular location is the basal cell membrane. It catalyses the reaction Na(+)(in) = Na(+)(out). Pore-forming subunit of Nav1.3, a voltage-gated sodium (Nav) channel that directly mediates the depolarizing phase of action potentials in excitable membranes. Navs, also called VGSCs (voltage-gated sodium channels) or VDSCs (voltage-dependent sodium channels), operate by switching between closed and open conformations depending on the voltage difference across the membrane. In the open conformation they allow Na(+) ions to selectively pass through the pore, along their electrochemical gradient. The influx of Na+ ions provokes membrane depolarization, initiating the propagation of electrical signals throughout cells and tissues. In some secretory cell types, it also participates in cell excitability through membrane depolarization and regulates cells responsiveness to stimuli triggering secretion. For instance, it controls the release of serotonin/5-hydroxytryptamine by enterochromaffin cells and is required for both glucagon- and glucose-induced insulin secretion in pancreatic endocrine cells. The chain is Sodium channel protein type 3 subunit alpha from Mus musculus (Mouse).